A 318-amino-acid polypeptide reads, in one-letter code: Retinol dehydrogenase 5 (318 aa).

The helical transmembrane segment at 1–23 (MWLPLLLGALLWAVLWLLRDRQS) threads the bilayer. Topologically, residues 24-288 (LPASDAFIFI…TRYSPGWDAK (265 aa)) are lumenal. Position 32 to 56 (32 to 56 (FITGCDSGFGRLLALQLDQKGFQVL)) interacts with NADP(+). S163 lines the substrate pocket. Y175 acts as the Proton acceptor in catalysis. Residues 289–309 (LLWLPASYLPARVVDAVLTWI) form a helical membrane-spanning segment. The Cytoplasmic segment spans residues 310-318 (LPRPAQSVS).

Belongs to the short-chain dehydrogenases/reductases (SDR) family. In terms of assembly, homodimer. In terms of tissue distribution, expressed in eye, liver, kidney, brain, intestine, placenta, epididymus and submaxillary gland. In eye, strongly expressed in the retinal pigment epithelium, with lower expression levels detected in the inner segment of the photoreceptor cells and in the outer plexiform layer. In kidney, strong expression detected in the distal tubules and the transitional epithelium in the renal pelvis, with weaker expression detected in the epithelium of the outer stripe of the outer zone of the medulla. In liver, detected in hepatocytes in the centrilobular area. In lung, present in club cells in the epithelium of the bronchiole, in parenchyma and in cartilage surrounding the secondary bronchi. In skin, expressed in epidermis, hair follicles and mast cells in the dermis. Expressed in heart. Not detected in heart. Not detected in lung, spleen, skeletal muscle and testis.

It is found in the endoplasmic reticulum membrane. It catalyses the reaction 11-cis-retinol + NAD(+) = 11-cis-retinal + NADH + H(+). The enzyme catalyses 9-cis-retinol + NAD(+) = 9-cis-retinal + NADH + H(+). The catalysed reaction is 13-cis-retinol + NAD(+) = 13-cis-retinal + NADH + H(+). It carries out the reaction androsterone + NAD(+) = 5alpha-androstan-3,17-dione + NADH + H(+). It catalyses the reaction 5alpha-androstane-3alpha,17beta-diol + NAD(+) = 17beta-hydroxy-5alpha-androstan-3-one + NADH + H(+). The protein operates within cofactor metabolism; retinol metabolism. With respect to regulation, inhibited by 9-cis-, 13-cis- and all-trans-retinoic acids, with the most potent inhibitor being 13-cis-retinoic acid. Weakly inhibited by oleic acid. Functionally, catalyzes the oxidation of cis-isomers of retinol, including 11-cis-, 9-cis-, and 13-cis-retinol in an NAD-dependent manner. Has no activity towards all-trans retinal. Plays a significant role in 11-cis retinol oxidation in the retinal pigment epithelium cells (RPE). Also recognizes steroids (androsterone, androstanediol) as its substrates. This is Retinol dehydrogenase 5 from Mus musculus (Mouse).